A 433-amino-acid chain; its full sequence is 5-methylthioadenosine/S-adenosylhomocysteine deaminase (433 aa).

Zn(2+) contacts are provided by His-67 and His-69. Residues Glu-96, Arg-148, and His-187 each contribute to the substrate site. Position 214 (His-214) interacts with Zn(2+). Positions 217 and 302 each coordinate substrate. Residue Asp-302 participates in Zn(2+) binding.

The protein belongs to the metallo-dependent hydrolases superfamily. MTA/SAH deaminase family. It depends on Zn(2+) as a cofactor.

The enzyme catalyses S-adenosyl-L-homocysteine + H2O + H(+) = S-inosyl-L-homocysteine + NH4(+). It carries out the reaction S-methyl-5'-thioadenosine + H2O + H(+) = S-methyl-5'-thioinosine + NH4(+). In terms of biological role, catalyzes the deamination of 5-methylthioadenosine and S-adenosyl-L-homocysteine into 5-methylthioinosine and S-inosyl-L-homocysteine, respectively. Is also able to deaminate adenosine. The protein is 5-methylthioadenosine/S-adenosylhomocysteine deaminase of Carboxydothermus hydrogenoformans (strain ATCC BAA-161 / DSM 6008 / Z-2901).